The following is a 345-amino-acid chain: Serpentine receptor class beta-13 (345 aa).

Topologically, residues M1–R22 are extracellular. An N-linked (GlcNAc...) asparagine glycan is attached at N5. Residues F23 to M43 traverse the membrane as a helical segment. At F44–T58 the chain is on the cytoplasmic side. The helical transmembrane segment at L59–G79 threads the bilayer. Residues Y80–Y103 are Extracellular-facing. An N-linked (GlcNAc...) asparagine glycan is attached at N97. The helical transmembrane segment at I104–I124 threads the bilayer. Topologically, residues E125–L142 are cytoplasmic. Residues I143–F163 form a helical membrane-spanning segment. Topologically, residues Q164–Y189 are extracellular. N-linked (GlcNAc...) asparagine glycosylation is present at N180. Residues L190–V210 traverse the membrane as a helical segment. Over H211–T241 the chain is Cytoplasmic. The chain crosses the membrane as a helical span at residues L242–V262. At R263–R280 the chain is on the extracellular side. Residue N275 is glycosylated (N-linked (GlcNAc...) asparagine). A helical membrane pass occupies residues G281 to L301. At S302 to F345 the chain is on the cytoplasmic side.

This sequence belongs to the nematode receptor-like protein srb family. Expressed in the head sensory neurons ASI, ASK and AWB. Not expressed in male somatic gonads or sperm.

Its subcellular location is the cell membrane. The protein localises to the perikaryon. The protein resides in the cell projection. It is found in the dendrite. Functionally, G-protein coupled receptor that antagonizes the negative effects of the gcy-35 oxygen sensor on spermatogenesis. This leads to the maintenance of mitochondrial function in developing spermatocytes and/or spermatids prior to testis maturation during the early larval stages. Regulates the navigational capacity of sperm during hyperoxic conditions ensuring the proper targeting of sperm derived from males to the fertilization site in the uterus of hermaphrodites. May act in the same signaling pathway as the neuropeptide flp-21. The protein is Serpentine receptor class beta-13 of Caenorhabditis elegans.